Here is a 1014-residue protein sequence, read N- to C-terminus: Klotho (1014 aa).

A signal peptide spans 1 to 34; that stretch reads MLARAPPRRPPRLVLLRLLLLHLLLLALRARCLS. Topologically, residues 35–982 are extracellular; the sequence is AEPGQGAQTW…TECGFFQTRK (948 aa). 2 glycosyl hydrolase-1 regions span residues 59–508 and 517–955; these read LHDT…DNGF and LEGT…SNGF. 6 N-linked (GlcNAc...) asparagine glycosylation sites follow: N161, N285, N346, N609, N614, and N696. Residues 983 to 1003 traverse the membrane as a helical segment; it reads SLLVFISFLVFTFIISLALIF. Topologically, residues 1004–1014 are cytoplasmic; that stretch reads HYSKKGQRSYK.

This sequence belongs to the glycosyl hydrolase 1 family. Klotho subfamily. In terms of assembly, homodimer. Interacts with FGF23 and FGFR1. In terms of processing, N-glycosylated. As to expression, membrane-bound protein is present in distal renal tubules, inner ear, ependymal cells of brain choroid plexus, elongating spermatids and mature oocytes (at protein level). Soluble peptide is present in serum (100 pM) and cerebrospinal fluid. Expressed strongly in kidney, moderately in brain choroid plexus, and at low levels in pituitary, placenta, skeletal muscle, urinary bladder, aorta, pancreas, testis, ovary, colon, thyroid gland and adipocytes.

Its subcellular location is the cell membrane. The protein localises to the apical cell membrane. It localises to the secreted. It catalyses the reaction a beta-D-glucuronoside + H2O = D-glucuronate + an alcohol. Inhibited by D-saccharic acid 1,4-lactone and taurocholic acid. Functionally, may have weak glycosidase activity towards glucuronylated steroids. However, it lacks essential active site Glu residues at positions 241 and 874, suggesting it may be inactive as a glycosidase in vivo. May be involved in the regulation of calcium and phosphorus homeostasis by inhibiting the synthesis of active vitamin D. Essential factor for the specific interaction between FGF23 and FGFR1. Its function is as follows. The Klotho peptide generated by cleavage of the membrane-bound isoform may be an anti-aging circulating hormone which would extend life span by inhibiting insulin/IGF1 signaling. In Mus musculus (Mouse), this protein is Klotho (Kl).